A 276-amino-acid chain; its full sequence is Mitochondrial outer membrane protein porin of 36 kDa (276 aa).

This sequence belongs to the eukaryotic mitochondrial porin (TC 1.B.8.1) family.

The protein localises to the mitochondrion outer membrane. In terms of biological role, forms a channel through the cell membrane that allows diffusion of small hydrophilic molecules. The channel adopts an open conformation at low or zero membrane potential and a closed conformation at potentials above 30-40 mV. The open state has a weak anion selectivity whereas the closed state is cation-selective. This Solanum tuberosum (Potato) protein is Mitochondrial outer membrane protein porin of 36 kDa.